Here is a 433-residue protein sequence, read N- to C-terminus: Apolipoprotein L5 (433 aa).

The segment at His-346–Gln-433 is disordered. Over residues Ser-359–Val-371 the composition is skewed to low complexity. Over residues Arg-422–Gln-433 the composition is skewed to basic residues.

Belongs to the apolipoprotein L family. Low level of expression; detected in uterus, testis, skeletal muscle and stomach.

It is found in the cytoplasm. In terms of biological role, may affect the movement of lipids in the cytoplasm or allow the binding of lipids to organelles. The sequence is that of Apolipoprotein L5 (APOL5) from Homo sapiens (Human).